The primary structure comprises 251 residues: 5'-nucleotidase SurE (251 aa).

Residues Asp8, Asp9, Ser40, and Asn95 each contribute to the a divalent metal cation site.

This sequence belongs to the SurE nucleotidase family. The cofactor is a divalent metal cation.

Its subcellular location is the cytoplasm. The catalysed reaction is a ribonucleoside 5'-phosphate + H2O = a ribonucleoside + phosphate. In terms of biological role, nucleotidase that shows phosphatase activity on nucleoside 5'-monophosphates. In Desulfitobacterium hafniense (strain DSM 10664 / DCB-2), this protein is 5'-nucleotidase SurE.